A 62-amino-acid chain; its full sequence is MSKTIVRKNESLDDALRRFKRTVSRNGTLQEYRKREFYEKPSVKRKLKSEAARKRKNKRRRY.

The segment covering 40 to 52 (KPSVKRKLKSEAA) has biased composition (basic and acidic residues). The tract at residues 40-62 (KPSVKRKLKSEAARKRKNKRRRY) is disordered. Residues 53–62 (RKRKNKRRRY) are compositionally biased toward basic residues.

Belongs to the bacterial ribosomal protein bS21 family.

The chain is Small ribosomal subunit protein bS21 from Limosilactobacillus fermentum (strain NBRC 3956 / LMG 18251) (Lactobacillus fermentum).